The primary structure comprises 243 residues: Carboxy-S-adenosyl-L-methionine synthase (243 aa).

S-adenosyl-L-methionine contacts are provided by residues Y40, 65 to 67 (GCS), 90 to 91 (DN), 118 to 119 (DI), N133, and R200.

Belongs to the class I-like SAM-binding methyltransferase superfamily. Cx-SAM synthase family. Homodimer.

It catalyses the reaction prephenate + S-adenosyl-L-methionine = carboxy-S-adenosyl-L-methionine + 3-phenylpyruvate + H2O. In terms of biological role, catalyzes the conversion of S-adenosyl-L-methionine (SAM) to carboxy-S-adenosyl-L-methionine (Cx-SAM). This chain is Carboxy-S-adenosyl-L-methionine synthase, found in Shewanella amazonensis (strain ATCC BAA-1098 / SB2B).